A 306-amino-acid polypeptide reads, in one-letter code: tRNA dimethylallyltransferase (306 aa).

12–19 (GPTAAGKT) serves as a coordination point for ATP. Residue 14 to 19 (TAAGKT) coordinates substrate. Interaction with substrate tRNA stretches follow at residues 37 to 40 (DSAL), 161 to 165 (QRINR), and 242 to 247 (RCVGYR).

The protein belongs to the IPP transferase family. Monomer. Requires Mg(2+) as cofactor.

The enzyme catalyses adenosine(37) in tRNA + dimethylallyl diphosphate = N(6)-dimethylallyladenosine(37) in tRNA + diphosphate. Functionally, catalyzes the transfer of a dimethylallyl group onto the adenine at position 37 in tRNAs that read codons beginning with uridine, leading to the formation of N6-(dimethylallyl)adenosine (i(6)A). This chain is tRNA dimethylallyltransferase, found in Pseudoalteromonas translucida (strain TAC 125).